A 517-amino-acid polypeptide reads, in one-letter code: 2,3-bisphosphoglycerate-independent phosphoglycerate mutase 1 (517 aa).

Mn(2+) is bound by residues aspartate 17 and serine 67. Serine 67 functions as the Phosphoserine intermediate in the catalytic mechanism. Substrate-binding positions include histidine 128, 158 to 159 (RD), arginine 190, arginine 196, 267 to 270 (RPDR), and lysine 340. The Mn(2+) site is built by aspartate 407, histidine 411, aspartate 448, histidine 449, and histidine 467.

Belongs to the BPG-independent phosphoglycerate mutase family. Mn(2+) is required as a cofactor.

It catalyses the reaction (2R)-2-phosphoglycerate = (2R)-3-phosphoglycerate. It participates in carbohydrate degradation; glycolysis; pyruvate from D-glyceraldehyde 3-phosphate: step 3/5. Its function is as follows. Catalyzes the interconversion of 2-phosphoglycerate and 3-phosphoglycerate. The sequence is that of 2,3-bisphosphoglycerate-independent phosphoglycerate mutase 1 from Methanosarcina barkeri (strain Fusaro / DSM 804).